The chain runs to 195 residues: PRELI domain containing protein 3B (195 aa).

The 172-residue stretch at 1–172 (MKIWTSEHVF…VIHKLNAEIE (172 aa)) folds into the PRELI/MSF1 domain. Phosphoserine is present on residues S46 and S51.

The protein belongs to the slowmo family.

This chain is PRELI domain containing protein 3B (Prelid3b), found in Mus musculus (Mouse).